The chain runs to 245 residues: 1-(5-phosphoribosyl)-5-[(5-phosphoribosylamino)methylideneamino] imidazole-4-carboxamide isomerase (245 aa).

Aspartate 7 functions as the Proton acceptor in the catalytic mechanism. The Proton donor role is filled by aspartate 129.

The protein belongs to the HisA/HisF family.

It localises to the cytoplasm. It carries out the reaction 1-(5-phospho-beta-D-ribosyl)-5-[(5-phospho-beta-D-ribosylamino)methylideneamino]imidazole-4-carboxamide = 5-[(5-phospho-1-deoxy-D-ribulos-1-ylimino)methylamino]-1-(5-phospho-beta-D-ribosyl)imidazole-4-carboxamide. Its pathway is amino-acid biosynthesis; L-histidine biosynthesis; L-histidine from 5-phospho-alpha-D-ribose 1-diphosphate: step 4/9. This is 1-(5-phosphoribosyl)-5-[(5-phosphoribosylamino)methylideneamino] imidazole-4-carboxamide isomerase from Citrobacter koseri (strain ATCC BAA-895 / CDC 4225-83 / SGSC4696).